A 132-amino-acid polypeptide reads, in one-letter code: Homeobox protein ceh-1 (132 aa).

Positions 1–60 (MRRARTAFTYEQLVALENKFKTSRYLSVVERLNLAIQLQLSETQVKIWFQNRRTKWKKHN) form a DNA-binding region, homeobox. The interval 56–80 (WKKHNPGQDANTPQTPPSSDETQIQ) is disordered. Polar residues predominate over residues 63 to 80 (QDANTPQTPPSSDETQIQ).

The protein localises to the nucleus. This is Homeobox protein ceh-1 (ceh-1) from Caenorhabditis elegans.